The primary structure comprises 240 residues: Fatty acid metabolism regulator protein (240 aa).

Residues 6–74 (KGPASFAEKY…HGKPTRVNNF (69 aa)) enclose the HTH gntR-type domain. A DNA-binding region (H-T-H motif) is located at residues 34 to 53 (ERELSELIGVTRTTLREVLQ).

In terms of assembly, homodimer.

The protein resides in the cytoplasm. Its function is as follows. Multifunctional regulator of fatty acid metabolism. The polypeptide is Fatty acid metabolism regulator protein (Shewanella oneidensis (strain ATCC 700550 / JCM 31522 / CIP 106686 / LMG 19005 / NCIMB 14063 / MR-1)).